Here is a 270-residue protein sequence, read N- to C-terminus: Regulatory protein RecX (270 aa).

This sequence belongs to the RecX family.

The protein localises to the cytoplasm. In terms of biological role, modulates RecA activity. The sequence is that of Regulatory protein RecX from Bacillus cereus (strain ZK / E33L).